Reading from the N-terminus, the 400-residue chain is Phosphoglycerate kinase (400 aa).

Substrate is bound by residues 21–23, R36, 59–62, R119, and R160; these read DFN and HLGR. ATP contacts are provided by residues K211, E329, and 356–359; that span reads GGDS.

It belongs to the phosphoglycerate kinase family. As to quaternary structure, monomer.

It localises to the cytoplasm. The enzyme catalyses (2R)-3-phosphoglycerate + ATP = (2R)-3-phospho-glyceroyl phosphate + ADP. It functions in the pathway carbohydrate degradation; glycolysis; pyruvate from D-glyceraldehyde 3-phosphate: step 2/5. This is Phosphoglycerate kinase from Levilactobacillus brevis (strain ATCC 367 / BCRC 12310 / CIP 105137 / JCM 1170 / LMG 11437 / NCIMB 947 / NCTC 947) (Lactobacillus brevis).